We begin with the raw amino-acid sequence, 275 residues long: Large ribosomal subunit protein uL2 (275 aa).

The segment at 218–275 is disordered; the sequence is RPQTRGSAMNPIDHPHGGGEGKTNSGRHPVSPWGMPTKGYKTRKKKASDKLIISKRKK. Residues 257–275 show a composition bias toward basic residues; that stretch reads YKTRKKKASDKLIISKRKK.

The protein belongs to the universal ribosomal protein uL2 family. In terms of assembly, part of the 50S ribosomal subunit. Forms a bridge to the 30S subunit in the 70S ribosome.

Its function is as follows. One of the primary rRNA binding proteins. Required for association of the 30S and 50S subunits to form the 70S ribosome, for tRNA binding and peptide bond formation. It has been suggested to have peptidyltransferase activity; this is somewhat controversial. Makes several contacts with the 16S rRNA in the 70S ribosome. The chain is Large ribosomal subunit protein uL2 from Sulfurovum sp. (strain NBC37-1).